The chain runs to 1275 residues: Myosin-1 (1275 aa).

The 693-residue stretch at 35 to 727 folds into the Myosin motor domain; that stretch reads VGVSDLTLLS…TLFAMEDMRD (693 aa). Residue 128–135 participates in ATP binding; the sequence is GESGAGKT. Position 361 is a phosphoserine (serine 361). Residues 410–493 form an actin-binding region; sequence TIGILDIYGF…PGLFAALNDS (84 aa). 2 IQ domains span residues 731–751 and 752–777; these read HNMA…KEDA and ARLI…YGNG. The region spanning 785–974 is the TH1 domain; it reads RRRMSMLGSR…KSGTVSVRPG (190 aa). Disordered regions lie at residues 966–1064, 1089–1128, 1183–1230, and 1251–1275; these read SGTV…LNNN, QNHN…AKPK, SECP…GGLS, and IADA…DDDW. A compositionally biased stretch (polar residues) spans 977–992; it reads PDSQNPKRPRATSSKV. The segment covering 1095–1106 has biased composition (low complexity); that stretch reads PTAPSRPAKKAA. The segment covering 1107 to 1121 has biased composition (pro residues); the sequence is PAPPVKKTAPPPPPS. Residues 1127–1187 enclose the SH3 domain; that stretch reads PKWPTFKANY…PTAYISECPP (61 aa). The span at 1254–1263 shows a compositional bias: basic and acidic residues; sequence ALKKRSATRD. A compositionally biased stretch (acidic residues) spans 1264–1275; sequence SDDEEEDDDDDW.

The protein belongs to the TRAFAC class myosin-kinesin ATPase superfamily. Myosin family. In terms of processing, phosphorylation of the TEDS site (Ser-361) is required for the polarization of the actin cytoskeleton. Phosphorylation probably activates the myosin-I ATPase activity.

The protein localises to the cytoplasm. It is found in the cytoskeleton. Its subcellular location is the actin patch. Its function is as follows. Type-I myosin implicated in the organization of the actin cytoskeleton. Required for proper actin cytoskeleton polarization. At the cell cortex, assembles in patch-like structures together with proteins from the actin-polymerizing machinery and promotes actin assembly. Functions as actin nucleation-promoting factor (NPF) for the Arp2/3 complex. This Meyerozyma guilliermondii (strain ATCC 6260 / CBS 566 / DSM 6381 / JCM 1539 / NBRC 10279 / NRRL Y-324) (Yeast) protein is Myosin-1 (MYO1).